The sequence spans 429 residues: Glutamate-1-semialdehyde 2,1-aminomutase 2 (429 aa).

Lysine 268 bears the N6-(pyridoxal phosphate)lysine mark.

The protein belongs to the class-III pyridoxal-phosphate-dependent aminotransferase family. HemL subfamily. In terms of assembly, homodimer. Requires pyridoxal 5'-phosphate as cofactor.

It localises to the cytoplasm. It catalyses the reaction (S)-4-amino-5-oxopentanoate = 5-aminolevulinate. It participates in porphyrin-containing compound metabolism; protoporphyrin-IX biosynthesis; 5-aminolevulinate from L-glutamyl-tRNA(Glu): step 2/2. This is Glutamate-1-semialdehyde 2,1-aminomutase 2 from Bacillus velezensis (strain DSM 23117 / BGSC 10A6 / LMG 26770 / FZB42) (Bacillus amyloliquefaciens subsp. plantarum).